We begin with the raw amino-acid sequence, 191 residues long: Elongation factor P (191 aa).

At Lys-34 the chain carries N6-(3,6-diaminohexanoyl)-5-hydroxylysine.

This sequence belongs to the elongation factor P family. May be beta-lysylated on the epsilon-amino group of Lys-34 by the combined action of EpmA and EpmB, and then hydroxylated on the C5 position of the same residue by EpmC (if this protein is present). Lysylation is critical for the stimulatory effect of EF-P on peptide-bond formation. The lysylation moiety may extend toward the peptidyltransferase center and stabilize the terminal 3-CCA end of the tRNA. Hydroxylation of the C5 position on Lys-34 may allow additional potential stabilizing hydrogen-bond interactions with the P-tRNA.

The protein resides in the cytoplasm. The protein operates within protein biosynthesis; polypeptide chain elongation. In terms of biological role, involved in peptide bond synthesis. Alleviates ribosome stalling that occurs when 3 or more consecutive Pro residues or the sequence PPG is present in a protein, possibly by augmenting the peptidyl transferase activity of the ribosome. Modification of Lys-34 is required for alleviation. This chain is Elongation factor P, found in Marinomonas sp. (strain MWYL1).